We begin with the raw amino-acid sequence, 369 residues long: MTQKTILNDTHRALGAKMVDFGGWDMPIHYGSQIDEHHQVRRDAGMFDVSHMTVVDLHGVRVREFLRYLLANSVDKLKVSGKALYTCMLNPQGGVIDDLIVYFMQEEFFRLVVNAATRDKDLQWIGEQAARFEVRVKERADFAMIAVQGPNARSKVIDLLDPADASAASKLGRFAALQTRTRDGVALFLARTGYTGEDGFEIVLPQADAVAFWNALLAHGVAPAGLGARDTLRLEAGMNLYGQDMDDNVTPYEAALAWTITLDEGRDFIGRSVLESQKAQGAPRQMIGVVMDEKGVLRHGQKVLSAGGEGEILSGTFSPTLGKAIAFARVPAGSIDDLRVDIRGKQVPLRAVKFPFVRDGQAQPGVLGA.

The protein belongs to the GcvT family. In terms of assembly, the glycine cleavage system is composed of four proteins: P, T, L and H.

The catalysed reaction is N(6)-[(R)-S(8)-aminomethyldihydrolipoyl]-L-lysyl-[protein] + (6S)-5,6,7,8-tetrahydrofolate = N(6)-[(R)-dihydrolipoyl]-L-lysyl-[protein] + (6R)-5,10-methylene-5,6,7,8-tetrahydrofolate + NH4(+). Functionally, the glycine cleavage system catalyzes the degradation of glycine. This is Aminomethyltransferase from Xanthomonas campestris pv. campestris (strain 8004).